Consider the following 120-residue polypeptide: NAD(P)H-quinone oxidoreductase subunit 3, chloroplastic (120 aa).

The next 3 helical transmembrane spans lie at 9-29 (IFWAFLIISSVIPILAFFISG), 64-84 (MFALVFVVFDVETVFLYPWAM), and 88-108 (VLGVSVFIEALIFVLILIVGS).

This sequence belongs to the complex I subunit 3 family. NDH is composed of at least 16 different subunits, 5 of which are encoded in the nucleus.

It is found in the plastid. The protein localises to the chloroplast thylakoid membrane. It carries out the reaction a plastoquinone + NADH + (n+1) H(+)(in) = a plastoquinol + NAD(+) + n H(+)(out). The catalysed reaction is a plastoquinone + NADPH + (n+1) H(+)(in) = a plastoquinol + NADP(+) + n H(+)(out). Its function is as follows. NDH shuttles electrons from NAD(P)H:plastoquinone, via FMN and iron-sulfur (Fe-S) centers, to quinones in the photosynthetic chain and possibly in a chloroplast respiratory chain. The immediate electron acceptor for the enzyme in this species is believed to be plastoquinone. Couples the redox reaction to proton translocation, and thus conserves the redox energy in a proton gradient. In Vitis vinifera (Grape), this protein is NAD(P)H-quinone oxidoreductase subunit 3, chloroplastic.